Here is an 895-residue protein sequence, read N- to C-terminus: Stonin-2 (895 aa).

3 disordered regions span residues 10–101, 144–204, and 236–279; these read THQS…AISN, ASES…METI, and NEVG…PKST. Basic and acidic residues predominate over residues 64–73; the sequence is SHSEQDDSSE. 2 stretches are compositionally biased toward polar residues: residues 145–169 and 179–193; these read SESS…TDLQ and GRAS…SSSL. Residues serine 278, serine 284, and serine 299 each carry the phosphoserine modification. 2 disordered regions span residues 291 to 326 and 386 to 424; these read ISSL…SPIN and QIDD…PRDG. Short sequence motifs (NPF) lie at residues 310 to 312 and 326 to 328; these read NPF. A compositionally biased stretch (polar residues) spans 311–323; the sequence is PFLNESLQDIQPS. The SHD domain occupies 424 to 557; sequence GWPMMLRIPE…DLPVQSMDLS (134 aa). An MHD domain is found at 565–872; sequence EEEITVDIRD…AHYSYKVEIE (308 aa). Serine 759 carries the post-translational modification Phosphoserine.

The protein belongs to the Stoned B family. In terms of assembly, interacts with the second C2 domain of synaptotagmins SYT1 and SYT2. Interacts with EPS15, EPS15R and ITSN1. Interacts indirectly with the AP-2 adapter complex. Interacts with TOR1A and COPS4; the interaction controls STON2 protein stability. Post-translationally, phosphorylated in vitro by PKD. Neddylated and ubiquitinated; leading to its degradation and inhibited by TOR1A and COPS4.

Its subcellular location is the synapse. The protein resides in the synaptosome. The protein localises to the cytoplasm. It is found in the membrane. Its function is as follows. Adapter protein involved in endocytic machinery. Involved in the synaptic vesicle recycling. May facilitate clathrin-coated vesicle uncoating. The protein is Stonin-2 (Ston2) of Rattus norvegicus (Rat).